We begin with the raw amino-acid sequence, 398 residues long: Mu-type opioid receptor (398 aa).

Topologically, residues 1–66 are extracellular; that stretch reads MDSSTGPGNT…CPQTGSPSMV (66 aa). Residues asparagine 9, asparagine 31, asparagine 38, asparagine 46, and asparagine 53 are each glycosylated (N-linked (GlcNAc...) asparagine). The chain crosses the membrane as a helical span at residues 67–91; that stretch reads TAITIMALYSIVCVVGLFGNFLVMY. The Cytoplasmic portion of the chain corresponds to 92 to 104; that stretch reads VIVRYTKMKTATN. A helical membrane pass occupies residues 105–129; that stretch reads IYIFNLALADALATSTLPFQSVNYL. Topologically, residues 130-140 are extracellular; the sequence is MGTWPFGTILC. Residues cysteine 140 and cysteine 217 are joined by a disulfide bond. Residues 141–163 traverse the membrane as a helical segment; that stretch reads KIVISIDYYNMFTSIFTLCTMSV. The Cytoplasmic segment spans residues 164–183; sequence DRYIAVCHPVKALDFRTPRN. Tyrosine 166 is subject to Phosphotyrosine. A helical transmembrane segment spans residues 184 to 205; that stretch reads AKIVNVCNWILSSAIGLPVMFM. The Extracellular portion of the chain corresponds to 206–228; that stretch reads ATTKYRQGSIDCTLTFSHPTWYW. Residues 229–253 form a helical membrane-spanning segment; that stretch reads ENLLKICVFIFAFIMPVLIITVCYG. At 254 to 277 the chain is on the cytoplasmic side; the sequence is LMILRLKSVRMLSGSKEKDRNLRR. The chain crosses the membrane as a helical span at residues 278 to 304; the sequence is ITRMVLVVVAVFIVCWTPIHIYVIIKA. Topologically, residues 305 to 312 are extracellular; that stretch reads LITIPETT. The chain crosses the membrane as a helical span at residues 313 to 336; the sequence is FQTVSWHFCIALGYTNSCLNPVLY. An NPxxY; plays a role in stabilizing the activated conformation of the receptor motif is present at residues 332 to 336; that stretch reads NPVLY. Over 337–398 the chain is Cytoplasmic; it reads AFLDENFKRC…NLEAETAPLP (62 aa). Cysteine 351 carries the S-palmitoyl cysteine lipid modification. Residues 361–385 form a disordered region; sequence QNSTRVRQNTREHPSTANTVDRTNH. Serine 363 carries the post-translational modification Phosphoserine. Residue threonine 370 is modified to Phosphothreonine. A Phosphoserine modification is found at serine 375. Phosphothreonine is present on threonine 394.

It belongs to the G-protein coupled receptor 1 family. Forms homooligomers and heterooligomers with other GPCRs, such as OPRD1, OPRK1, OPRL1, NPFFR2, ADRA2A, SSTR2, CNR1 and CCR5 (probably in dimeric forms). Interacts with heterotrimeric G proteins; interaction with a heterotrimeric complex containing GNAI1, GNB1 and GNG2 stabilizes the active conformation of the receptor and increases its affinity for endomorphin-2, the synthetic opioid peptide DAMGO and for morphinan agonists. Interacts with PPL; the interaction disrupts agonist-mediated G-protein activation. Interacts (via C-terminus) with DNAJB4 (via C-terminus). Interacts with calmodulin; the interaction inhibits the constitutive activity of OPRM1; it abolishes basal and attenuates agonist-stimulated G-protein coupling. Interacts with FLNA, PLD2, RANBP9 and WLS and GPM6A. Interacts with RTP4. Interacts with SYP and GNAS. Interacts with RGS9, RGS17, RGS20, RGS4, PPP1R9B and HINT1. Post-translationally, phosphorylated. Differentially phosphorylated in basal and agonist-induced conditions. Agonist-mediated phosphorylation modulates receptor internalization. Phosphorylated by GRK2 in a agonist-dependent manner. Phosphorylation at Tyr-166 requires receptor activation, is dependent on non-receptor protein tyrosine kinase Src and results in a decrease in agonist efficacy by reducing G-protein coupling efficiency. Phosphorylated on tyrosine residues; the phosphorylation is involved in agonist-induced G-protein-independent receptor down-regulation. Phosphorylation at Ser-375 is involved in G-protein-dependent but not beta-arrestin-dependent activation of the ERK pathway. In terms of processing, ubiquitinated. A basal ubiquitination seems not to be related to degradation. Ubiquitination is increased upon formation of OPRM1:OPRD1 oligomers leading to proteasomal degradation; the ubiquitination is diminished by RTP4. As to expression, brain. Is expressed in the cerebral cortex, caudate putamen, nucleus accumbens, septal nuclei, thalamus, hippocampus, and habenula. Not detected in cerebellum.

Its subcellular location is the cell membrane. It is found in the cell projection. The protein localises to the axon. It localises to the perikaryon. The protein resides in the dendrite. Its subcellular location is the endosome. In terms of biological role, receptor for endogenous opioids such as beta-endorphin and endomorphin. Receptor for natural and synthetic opioids including morphine, heroin, DAMGO, fentanyl, etorphine, buprenorphin and methadone. Also activated by enkephalin peptides, such as Met-enkephalin or Met-enkephalin-Arg-Phe, with higher affinity for Met-enkephalin-Arg-Phe. Agonist binding to the receptor induces coupling to an inactive GDP-bound heterotrimeric G-protein complex and subsequent exchange of GDP for GTP in the G-protein alpha subunit leading to dissociation of the G-protein complex with the free GTP-bound G-protein alpha and the G-protein beta-gamma dimer activating downstream cellular effectors. The agonist- and cell type-specific activity is predominantly coupled to pertussis toxin-sensitive G(i) and G(o) G alpha proteins, GNAI1, GNAI2, GNAI3 and GNAO1 isoforms Alpha-1 and Alpha-2, and to a lesser extent to pertussis toxin-insensitive G alpha proteins GNAZ and GNA15. They mediate an array of downstream cellular responses, including inhibition of adenylate cyclase activity and both N-type and L-type calcium channels, activation of inward rectifying potassium channels, mitogen-activated protein kinase (MAPK), phospholipase C (PLC), phosphoinositide/protein kinase (PKC), phosphoinositide 3-kinase (PI3K) and regulation of NF-kappa-B. Also couples to adenylate cyclase stimulatory G alpha proteins. The selective temporal coupling to G-proteins and subsequent signaling can be regulated by RGSZ proteins, such as RGS9, RGS17 and RGS4. Phosphorylation by members of the GPRK subfamily of Ser/Thr protein kinases and association with beta-arrestins is involved in short-term receptor desensitization. Beta-arrestins associate with the GPRK-phosphorylated receptor and uncouple it from the G-protein thus terminating signal transduction. The phosphorylated receptor is internalized through endocytosis via clathrin-coated pits which involves beta-arrestins. The activation of the ERK pathway occurs either in a G-protein-dependent or a beta-arrestin-dependent manner and is regulated by agonist-specific receptor phosphorylation. Acts as a class A G-protein coupled receptor (GPCR) which dissociates from beta-arrestin at or near the plasma membrane and undergoes rapid recycling. Receptor down-regulation pathways are varying with the agonist and occur dependent or independent of G-protein coupling. Endogenous ligands induce rapid desensitization, endocytosis and recycling. Heterooligomerization with other GPCRs can modulate agonist binding, signaling and trafficking properties. The polypeptide is Mu-type opioid receptor (Oprm1) (Rattus norvegicus (Rat)).